Reading from the N-terminus, the 1500-residue chain is DNA-directed RNA polymerase subunit beta' (1500 aa).

Residues Cys60, Cys62, Cys75, and Cys78 each coordinate Zn(2+). The disordered stretch occupies residues 180 to 199 (DLGGMETAQRSTQRQIEEDY). 3 residues coordinate Mg(2+): Asp626, Asp628, and Asp630. The Zn(2+) site is built by Cys1002, Cys1075, Cys1082, and Cys1085. Positions 1440–1500 (EVQQAEKSAE…DSDHPDLSSL (61 aa)) are disordered. The span at 1449 to 1468 (EPTTTALPTTNGHQAPQSDT) shows a compositional bias: polar residues.

Belongs to the RNA polymerase beta' chain family. In terms of assembly, the RNAP catalytic core consists of 2 alpha, 1 beta, 1 beta' and 1 omega subunit. When a sigma factor is associated with the core the holoenzyme is formed, which can initiate transcription. Mg(2+) serves as cofactor. The cofactor is Zn(2+).

The catalysed reaction is RNA(n) + a ribonucleoside 5'-triphosphate = RNA(n+1) + diphosphate. DNA-dependent RNA polymerase catalyzes the transcription of DNA into RNA using the four ribonucleoside triphosphates as substrates. This is DNA-directed RNA polymerase subunit beta' from Chloroflexus aggregans (strain MD-66 / DSM 9485).